Reading from the N-terminus, the 55-residue chain is Photosystem I reaction center subunit IX (55 aa).

The chain crosses the membrane as a helical span at residues 7 to 27 (YLSVAPVLSTLWFGSLAGLLI).

This sequence belongs to the PsaJ family.

It is found in the plastid. The protein localises to the chloroplast thylakoid membrane. Functionally, may help in the organization of the PsaE and PsaF subunits. The protein is Photosystem I reaction center subunit IX of Gossypium barbadense (Sea Island cotton).